Reading from the N-terminus, the 196-residue chain is Cell division protein SepF (196 aa).

A disordered region spans residues 16-81 (EDDEEFNEPA…KRAGSTFTKP (66 aa)). Polar residues predominate over residues 56–69 (RPAQSTSKAQTQTA).

Belongs to the SepF family. In terms of assembly, homodimer. Interacts with FtsZ.

Its subcellular location is the cytoplasm. Cell division protein that is part of the divisome complex and is recruited early to the Z-ring. Probably stimulates Z-ring formation, perhaps through the cross-linking of FtsZ protofilaments. Its function overlaps with FtsA. The protein is Cell division protein SepF of Lactococcus lactis subsp. lactis (strain IL1403) (Streptococcus lactis).